The following is a 111-amino-acid chain: uncharacterized protein (111 aa).

The disordered stretch occupies residues 12–34 (AWCPSRPPASAPSAPQEAARRGD). A required for interaction with PPP3CA region spans residues 71–76 (PNIIIT). A phosphothreonine mark is found at Thr79 and Thr81.

In terms of assembly, interacts (via PxIxIT motif, when phosphorylated on Thr-79) with PPP3CA.

This is an uncharacterized protein from Mus musculus (Mouse).